The sequence spans 556 residues: Formate--tetrahydrofolate ligase (556 aa).

65–72 (TPAGEGKS) serves as a coordination point for ATP.

It belongs to the formate--tetrahydrofolate ligase family.

It carries out the reaction (6S)-5,6,7,8-tetrahydrofolate + formate + ATP = (6R)-10-formyltetrahydrofolate + ADP + phosphate. It functions in the pathway one-carbon metabolism; tetrahydrofolate interconversion. In Streptococcus thermophilus (strain CNRZ 1066), this protein is Formate--tetrahydrofolate ligase.